Here is a 267-residue protein sequence, read N- to C-terminus: Non-homologous end joining protein Ku (267 aa).

The region spanning 10 to 190 (ISFGLVSFPV…TKYTAKELEL (181 aa)) is the Ku domain.

This sequence belongs to the prokaryotic Ku family. Homodimer. Interacts with LigD.

Functionally, with LigD forms a non-homologous end joining (NHEJ) DNA repair enzyme, which repairs dsDNA breaks with reduced fidelity. Binds linear dsDNA with 5'- and 3'- overhangs but not closed circular dsDNA nor ssDNA. Recruits and stimulates the ligase activity of LigD. This Solibacter usitatus (strain Ellin6076) protein is Non-homologous end joining protein Ku.